Consider the following 243-residue polypeptide: Pyridoxine 5'-phosphate synthase (243 aa).

N7 lines the 3-amino-2-oxopropyl phosphate pocket. 9–10 (DH) provides a ligand contact to 1-deoxy-D-xylulose 5-phosphate. R18 lines the 3-amino-2-oxopropyl phosphate pocket. H43 acts as the Proton acceptor in catalysis. 1-deoxy-D-xylulose 5-phosphate contacts are provided by R45 and H50. E70 serves as the catalytic Proton acceptor. T100 is a 1-deoxy-D-xylulose 5-phosphate binding site. The Proton donor role is filled by H191. 3-amino-2-oxopropyl phosphate contacts are provided by residues G192 and 213–214 (GH).

Belongs to the PNP synthase family. As to quaternary structure, homooctamer; tetramer of dimers.

It localises to the cytoplasm. The catalysed reaction is 3-amino-2-oxopropyl phosphate + 1-deoxy-D-xylulose 5-phosphate = pyridoxine 5'-phosphate + phosphate + 2 H2O + H(+). The protein operates within cofactor biosynthesis; pyridoxine 5'-phosphate biosynthesis; pyridoxine 5'-phosphate from D-erythrose 4-phosphate: step 5/5. Catalyzes the complicated ring closure reaction between the two acyclic compounds 1-deoxy-D-xylulose-5-phosphate (DXP) and 3-amino-2-oxopropyl phosphate (1-amino-acetone-3-phosphate or AAP) to form pyridoxine 5'-phosphate (PNP) and inorganic phosphate. The chain is Pyridoxine 5'-phosphate synthase from Magnetococcus marinus (strain ATCC BAA-1437 / JCM 17883 / MC-1).